The sequence spans 228 residues: 2-C-methyl-D-erythritol 4-phosphate cytidylyltransferase (228 aa).

Belongs to the IspD/TarI cytidylyltransferase family. IspD subfamily.

It catalyses the reaction 2-C-methyl-D-erythritol 4-phosphate + CTP + H(+) = 4-CDP-2-C-methyl-D-erythritol + diphosphate. Its pathway is isoprenoid biosynthesis; isopentenyl diphosphate biosynthesis via DXP pathway; isopentenyl diphosphate from 1-deoxy-D-xylulose 5-phosphate: step 2/6. In terms of biological role, catalyzes the formation of 4-diphosphocytidyl-2-C-methyl-D-erythritol from CTP and 2-C-methyl-D-erythritol 4-phosphate (MEP). This is 2-C-methyl-D-erythritol 4-phosphate cytidylyltransferase from Halalkalibacterium halodurans (strain ATCC BAA-125 / DSM 18197 / FERM 7344 / JCM 9153 / C-125) (Bacillus halodurans).